Consider the following 483-residue polypeptide: Regulatory protein ViaA (483 aa).

It belongs to the ViaA family. As to quaternary structure, homodimer. Interacts with RavA.

It is found in the cytoplasm. Functionally, component of the RavA-ViaA chaperone complex, which may act on the membrane to optimize the function of some of the respiratory chains. ViaA stimulates the ATPase activity of RavA. The protein is Regulatory protein ViaA of Escherichia coli O17:K52:H18 (strain UMN026 / ExPEC).